Consider the following 161-residue polypeptide: 3-isopropylmalate dehydratase small subunit (161 aa).

This sequence belongs to the LeuD family. LeuD type 2 subfamily. As to quaternary structure, heterodimer of LeuC and LeuD.

The enzyme catalyses (2R,3S)-3-isopropylmalate = (2S)-2-isopropylmalate. It functions in the pathway amino-acid biosynthesis; L-leucine biosynthesis; L-leucine from 3-methyl-2-oxobutanoate: step 2/4. Functionally, catalyzes the isomerization between 2-isopropylmalate and 3-isopropylmalate, via the formation of 2-isopropylmaleate. This Clostridium beijerinckii (strain ATCC 51743 / NCIMB 8052) (Clostridium acetobutylicum) protein is 3-isopropylmalate dehydratase small subunit.